Consider the following 618-residue polypeptide: Ubiquitin carboxyl-terminal hydrolase 2 (618 aa).

The segment at 1–213 (MSQLSSTLKR…RSEYLTDYLE (213 aa)) is necessary for interaction with MDM4. 2 disordered regions span residues 54–112 (VSPT…GGSG) and 246–274 (RYTLWEKNKGQASGPSRSTSPGRDTMNSK). Residues 90 to 100 (KRSESQTRGNE) show a composition bias toward basic and acidic residues. Residues 255–274 (GQASGPSRSTSPGRDTMNSK) are compositionally biased toward polar residues. In terms of domain architecture, USP spans 280 to 612 (AGLRNLGNTC…DAYLLFYELA (333 aa)). Cysteine 289 serves as the catalytic Nucleophile. The interval 416–516 (YLEREDSRIG…FPKILVLHLK (101 aa)) is necessary for interaction with MDM4. Zn(2+) is bound by residues cysteine 438, cysteine 441, cysteine 489, and cysteine 492. The active-site Proton acceptor is histidine 570.

This sequence belongs to the peptidase C19 family. USP2 subfamily. Homooligomer. Found in trimeric complex with MDM2 and MDM4 and USP2. Interacts with CCND1; the interaction is direct and promotes its stabilization by antagonizing ubiquitin-dependent degradation. Interacts (via N-terminus and C-terminus) with MDM2. Interacts with MDM4. Interacts with PER1. Interacts with KCNQ1; counteracts the NEDD4L-specific down-regulation of I(Ks) and restores plasma membrane localization of KCNQ1. Isoform 4: Interacts with NHERF4 and CLTC. Expressed in mesangial cells of the kidney. Isoform 1 and isoform 2 are expressed in elongated spermatids; the shorter form appearing earlier than the longer form (at protein level). Isoform 1 and isoform 2 are expressed in early round spermatids of the testis. Isoform 1 is expressed in muscle and heart. Isoform 2 is expressed in muscle, lung, heart, brain, liver and ovary. During muscle differentiation, isoform 1 expression increases before the onset of membrane fusion and decreases as the myogenic processes proceeded; un counterpart, isoform 2 expression remains low until the burst of membrane fusion but increases thereafter.

It localises to the cytoplasm. Its subcellular location is the perinuclear region. The protein localises to the nucleus. It is found in the membrane. The catalysed reaction is Thiol-dependent hydrolysis of ester, thioester, amide, peptide and isopeptide bonds formed by the C-terminal Gly of ubiquitin (a 76-residue protein attached to proteins as an intracellular targeting signal).. With respect to regulation, cleavage is inhibited by ubiquitin in a dosage-dependent manner. Cleavage is blocked by ubiquitin aldehyde. In terms of biological role, hydrolase that deubiquitinates polyubiquitinated target proteins such as MDM2, MDM4 and CCND1. Isoform 1 and isoform 2 possess both ubiquitin-specific peptidase and isopeptidase activities. Deubiquitinates MDM2 without reversing MDM2-mediated p53/TP53 ubiquitination and thus indirectly promotes p53/TP53 degradation and limits p53 activity. Has no deubiquitinase activity against p53/TP53. Prevents MDM2-mediated degradation of MDM4. Plays a role in the G1/S cell-cycle progression in normal and cancer cells. Regulates the circadian clock by modulating its intrinsic circadian rhythm and its capacity to respond to external cues. Associates with clock proteins and deubiquitinates core clock component PER1 but does not affect its overall stability. Regulates the nucleocytoplasmic shuttling and nuclear retention of PER1 and its repressive role on the clock transcription factors CLOCK and BMAL1. Plays a role in the regulation of myogenic differentiation of embryonic muscle cells. Its function is as follows. Circadian clock output effector that regulates Ca(2+) absorption in the small intestine. Probably functions by regulating protein levels of the membrane scaffold protein NHERF4 in a rhythmic manner, and is therefore likely to control Ca(2+) membrane permeability mediated by the Ca(2+) channel TRPV6 in the intestine. The protein is Ubiquitin carboxyl-terminal hydrolase 2 (Usp2) of Rattus norvegicus (Rat).